Here is a 1907-residue protein sequence, read N- to C-terminus: Chromatin modification-related protein EAF1 B (1907 aa).

4 disordered regions span residues 108–208, 261–287, 323–373, and 449–469; these read ASPH…TDLV, NRVS…GSKT, GGSP…SHAN, and NQSH…ETEK. Residues 140–151 are compositionally biased toward basic and acidic residues; that stretch reads SENKSVEGERNL. 3 stretches are compositionally biased toward polar residues: residues 261–270, 333–342, and 355–372; these read NRVSSNSLNT, GQKNSSTQLN, and TNRG…SSHA. The 79-residue stretch at 563 to 641 folds into the HSA domain; sequence CGTAPVEVRE…LSYAILQFWS (79 aa). Disordered stretches follow at residues 836–909 and 928–952; these read SSSL…AVQK and AETS…TWHL. The span at 856 to 866 shows a compositional bias: basic residues; that stretch reads RRVRTASRHRV. Composition is skewed to polar residues over residues 884–898 and 942–952; these read TDAS…QDEY and QGSAYDQTWHL. The region spanning 1049 to 1105 is the SANT domain; it reads SGNPWSLFEDQALVVLVHDMGPNWELISDAMNSTLKIKYIYRNPTECKDRHKILMDK. 8 disordered regions span residues 1107-1131, 1235-1266, 1296-1319, 1429-1465, 1477-1594, 1638-1703, 1767-1791, and 1824-1907; these read AGDG…PGIP, PVLP…GLQS, LSGR…DRGH, GHLS…QQEA, YLQQ…QQLN, VRPD…SPAT, VPQS…QASN, and VNNS…TKVE. 5 stretches are compositionally biased toward polar residues: residues 1116–1125, 1242–1266, 1296–1310, 1431–1444, and 1453–1462; these read DSGNSQSYPS, AHPS…GLQS, LSGR…STPA, LSQQ…SHVL, and QSPSQATGAQ. Over residues 1493–1512 the composition is skewed to low complexity; it reads PHVQQPQGSSVSSSSQNSPQ. The span at 1513–1529 shows a compositional bias: pro residues; the sequence is TQPPVSPQPLSMPPVSP. Polar residues-rich tracts occupy residues 1532–1545, 1554–1568, 1585–1594, 1640–1655, 1662–1672, 1681–1703, 1769–1782, and 1824–1844; these read NINA…QKSQ, SPQS…QAGK, RQPTQGQQLN, PDQQ…TDLQ, PLSSNHSQQLP, PSPQ…SPAT, QSVT…SMGT, and VNNS…NQGL. Composition is skewed to basic and acidic residues over residues 1863–1872 and 1882–1892; these read SEEKRPKLPE and LASEEQPHLEE.

Belongs to the EAF1 family. In terms of assembly, component of the NuA4 histone acetyltransferase complex. Interacts with ARP4 and SWC4, and (via HSA domain) with TAF14 and TAF14B. As to expression, expressed in leaves.

Its subcellular location is the nucleus. Its function is as follows. Component of the NuA4 histone acetyltransferase complex which is involved in transcriptional activation of selected genes principally by acetylation of nucleosomal histone H4 and H2A. This Arabidopsis thaliana (Mouse-ear cress) protein is Chromatin modification-related protein EAF1 B (EAF1B).